Reading from the N-terminus, the 300-residue chain is 2-dehydropantoate 2-reductase (300 aa).

Residues 7 to 12 (GAGAIG), Lys-74, Asn-99, and Ala-123 contribute to the NADP(+) site. Lys-179 acts as the Proton donor in catalysis. Substrate is bound by residues Lys-179, Asn-183, Asn-187, Asn-197, and 246–249 (NYNS). Glu-261 is a binding site for NADP(+).

The protein belongs to the ketopantoate reductase family.

The protein localises to the cytoplasm. The catalysed reaction is (R)-pantoate + NAD(+) = 2-dehydropantoate + NADH + H(+). It catalyses the reaction (R)-pantoate + NADP(+) = 2-dehydropantoate + NADPH + H(+). It participates in cofactor biosynthesis; coenzyme A biosynthesis. Functionally, catalyzes the NAD(P)H-dependent reduction of ketopantoate into pantoic acid. The chain is 2-dehydropantoate 2-reductase (apbA) from Pyrococcus abyssi (strain GE5 / Orsay).